The following is a 47-amino-acid chain: Large ribosomal subunit protein bL27c (47 aa).

The disordered stretch occupies residues 1–21 (STKNGRDSNAQRLGVKKYGGE).

This sequence belongs to the bacterial ribosomal protein bL27 family.

Its subcellular location is the plastid. The protein resides in the chloroplast. The sequence is that of Large ribosomal subunit protein bL27c (rpl27) from Porphyridium purpureum (Red alga).